A 519-amino-acid chain; its full sequence is MLEIITVRKVFLIGFLILILNWVWRAVNWVWLRPKRLEKYLKKQGFSGNSYRILMGDMRESNQMDQVAHSLPLPLDADFLPRMMPFLHHTVLKHGKKCFTWYGPYPNVIVMDPETLREIMSKHELFPKPKIGSHNHVFLSGLLNHEGPKWSKHRSILNPAFRIDNLKSILPAFNSSCKEMLEEWERLASAKGTMELDSWTHCHDLTRNMLARASFGDSYKDGIKIFEIQQEQIDLGLLAIRAVYIPGSKFLPTKFNRRLRETERDMRAMFKAMIETKEEEIKRGRGTDKNSDLLFSMLASNTKTIKEQGPDSGLSLDDLIDDCKAFYLAGQNVTSSLFVWTLVALSQHQDWQNKARDEISQAFGNNEPDFEGLSHLKVVTMILHEVLRLYSPAYFTCRITKQEVKLERFSLPEGVVVTIPMLLVHHDSDLWGDDVKEFKPERFANGVAGATKGRLSFLPFSSGPRTCIGQNFSMLQAKLFLAMVLQRFSVELSPSYTHAPFPAATTFPQHGAHLIIRKL.

A helical transmembrane segment spans residues 10–30 (VFLIGFLILILNWVWRAVNWV). Cys467 provides a ligand contact to heme.

It belongs to the cytochrome P450 family. The cofactor is heme. Expressed in hypocotyls, roots, cotyledons, stamens and silique junctions.

Its subcellular location is the membrane. Atypical cytochrome P450 involved in brassinosteroids (BRs) inactivation and regulation of BRs homeostasis. Does not possess carbon 26 hydroxylase activity and may inactivate BRs by hydroxylation of carbons other than C-26. Acts in association with CYP734A1 to inactivate BRs and modulate photomorphogenesis. The polypeptide is Cytochrome P450 72C1 (CYP72C1) (Arabidopsis thaliana (Mouse-ear cress)).